The primary structure comprises 868 residues: MLQAYRRHVADRQKLGIPPLPLNAQQTTELCELLKNPPEAEKEELMMLLRDRVPPGVDEAAYVKAGFLTAIAKGEVTCPLISGQGAVDLLGTMIGGYNVQSLIELLKSKDTNIASAAATALSKTLLVFDAFNDVLHLSDTNGYAKQVIDAWAEGAWFINKPEVPERITVTVFKVPGETNTDDLSPAPHATTRPDIPLHALAMLEAKMPEGLGTIAELKQKGHPVAYVGDVVGTGSSRKSAINSVLWHIGTDIPFVPNKRAGGYILGGKIAPIFFNTAEDSGALPIECDVNQLNTGDVITIYPREGKITNKAGETITTFQLKPETILDEVRAGGRIPLLIGRALTDKTREALGLSPSPLFVRPTAPADTGKGFTLAQKMVGKACGVQGIRPGTSCEPIMTTVGSQDTTGPMTRDELKELACLGFNADLTLQTFCHTAAYPKPVDIKTHKDLPDFFSTRGGVALRPGDGIIHSWLNRMLLPDTVGTGGDSHTRFPLGISFPAGSGLVAFAAALGVMPLDMPESVLVKFTGELQPGVTLRDIVNAIPWVAMQQGKLTVGKGDKVNVFNGRIMEMEGLPDLKVEQAFELTDATAERSCSGSTIKLSEETVAEYLRSNVVLMKNMIARGYQDARTLLRRIAKMEEWLANPSLMSGDADAEYADVIEVNLDEIKEPIVAAPNDPDNVKLMSECAGDVIHEVFIGSCMTNIGHYRAAAKILEGAGTVKGRLWICPPTRMDEQQLREEGIYGIFAAAGARTEMPGCSLCMGNQARVEDGVTVFSTSTRNFNNRMGKGAQVYLGSAELAAVCALLGKIPTVEEYLAIVSEKVAPFEGELYRYLNFNEIDNFEDFGRVIPLDQMPKIEDILGMPVGAK.

Substrate-binding positions include Arg192, 235-237 (SSR), 404-406 (QDT), and Ser488. [4Fe-4S] cluster contacts are provided by Cys700, Cys758, and Cys761. Substrate is bound by residues Arg780 and Arg785.

The protein belongs to the aconitase/IPM isomerase family. As to quaternary structure, monomer. It depends on [4Fe-4S] cluster as a cofactor.

It catalyses the reaction citrate = D-threo-isocitrate. It carries out the reaction (2S,3R)-3-hydroxybutane-1,2,3-tricarboxylate = 2-methyl-cis-aconitate + H2O. Its pathway is carbohydrate metabolism; tricarboxylic acid cycle; isocitrate from oxaloacetate: step 2/2. It participates in organic acid metabolism; propanoate degradation. Involved in the catabolism of short chain fatty acids (SCFA) via the tricarboxylic acid (TCA)(acetyl degradation route) and probably via the 2-methylcitrate cycle I (propionate degradation route). Catalyzes the reversible isomerization of citrate to isocitrate via cis-aconitate. Catalyzes the hydration of 2-methyl-cis-aconitate to yield (2R,3S)-2-methylisocitrate. The apo form of AcnB functions as a RNA-binding regulatory protein. This chain is Aconitate hydratase B (acnB), found in Synechocystis sp. (strain ATCC 27184 / PCC 6803 / Kazusa).